The sequence spans 892 residues: Inner centromere protein B (892 aa).

Disordered stretches follow at residues 50-124 (AEPE…KRMT), 160-182 (EHER…EMKT), 255-286 (LVNE…SLVV), 305-470 (KRES…PPPH), 502-555 (KRNT…RRED), 569-687 (QLEE…RERE), 702-760 (ERAA…AAAA), and 797-819 (NYGM…KPIP). A compositionally biased stretch (basic residues) spans 60-69 (SQKRRRKKRT). Residues 90–99 (SANWSSSVRR) are compositionally biased toward low complexity. The segment covering 259-272 (QPLNLSNESATPTG) has biased composition (polar residues). The span at 305 to 315 (KRESMTREAVR) shows a compositional bias: basic and acidic residues. Residues 316–326 (KSIRQSISKKK) are compositionally biased toward basic residues. Low complexity predominate over residues 332–343 (SSTSSQRSCHSS). Residues 431–444 (RAVDELSDDERPSE) show a composition bias toward basic and acidic residues. Residues 455–470 (PSPPCPPSKIVKPPPH) show a composition bias toward pro residues. Composition is skewed to basic and acidic residues over residues 509–555 (PDPK…RRED), 569–602 (QLEE…EEKA), 609–687 (KKQE…RERE), and 702–754 (ERAA…KAKE). The segment at 512 to 725 (KSEEKERQRL…EERKKREQQQ (214 aa)) is SAH. An IN box region spans residues 802 to 876 (LNSDDSTDDE…RTSSAVWHSP (75 aa)). 2 positions are modified to phosphoserine: Ser-869 and Ser-870.

The protein belongs to the INCENP family. In terms of assembly, component of the CPC at least composed of survivin/birc5, incenp, cdca8/borealin and/or cdca9/dasra-A, and aurkb/aurora-B. Interacts (via C-terminus) with aurkb (via N-terminus and kinase domain). Interacts (via N-terminus) with birc5.1, birc5.2, cdca8 and cdca9. Interacts with mtus1.

It localises to the nucleus. The protein localises to the chromosome. Its subcellular location is the centromere. The protein resides in the cytoplasm. It is found in the cytoskeleton. It localises to the spindle. The protein localises to the midbody. Its subcellular location is the kinetochore. In terms of biological role, component of the chromosomal passenger complex (CPC), a complex that acts as a key regulator of mitosis. The CPC complex has essential functions at the centromere in ensuring correct chromosome alignment and segregation and is required for chromatin-induced microtubule stabilization and spindle assembly. Acts as a scaffold regulating CPC localization and activity. The C-terminus associates with aurkb/aurora-B, the N-terminus associated with cdca8/borealin and/or cdca9/dasra-A tethers the CPC to the inner centromere, and the microtubule binding activity within the central SAH domain directs aurkb/aurora-B toward substrates near microtubules. Activates aurkb. This chain is Inner centromere protein B (incenp-b), found in Xenopus laevis (African clawed frog).